Reading from the N-terminus, the 682-residue chain is T-box brain protein 1 (682 aa).

2 disordered regions span residues 43–83 and 108–127; these read TDNL…RSKL and SQSSQPQSAATAPSAMFPYP. Residues 58 to 68 show a composition bias toward polar residues; that stretch reads GMTNQSDTDNF. Residues 108–122 show a composition bias toward low complexity; the sequence is SQSSQPQSAATAPSA. A DNA-binding region (T-box) is located at residues 213 to 393; sequence LWLKFHRHQT…HNPFAKGFRD (181 aa). Thr-408 bears the Phosphothreonine mark. Ser-410 is modified (phosphoserine). Disordered stretches follow at residues 447–483 and 588–658; these read PGAGAGPGPGTDRSVPHTNGLLSPQQAEDPGAPSPQR and GLAA…KSEV. The span at 462-472 shows a compositional bias: polar residues; sequence PHTNGLLSPQQ. Phosphoserine is present on Ser-594. The segment covering 619-629 has biased composition (low complexity); it reads SSIKSIDSSDS. At Ser-641 the chain carries Phosphoserine.

As to quaternary structure, homodimer. Part of a complex containing CASK, TBR1 and TSPYL2; may modulate gene expression in response to neuronal synaptic activity. Interacts with FOXP2. Interacts with FOXP1. Interacts with BCL11A. In terms of tissue distribution, brain.

The protein resides in the nucleus. Its function is as follows. Transcriptional repressor involved in multiple aspects of cortical development, including neuronal migration, laminar and areal identity, and axonal projection. As transcriptional repressor of FEZF2, it blocks the formation of the corticospinal (CS) tract from layer 6 projection neurons, thereby restricting the origin of CS axons specifically to layer 5 neurons. This chain is T-box brain protein 1 (TBR1), found in Homo sapiens (Human).